The following is a 31-amino-acid chain: AFCNLRMCQLSCRSLGLLGKCIGDKCECVKH.

3 disulfides stabilise this stretch: Cys3–Cys21, Cys8–Cys26, and Cys12–Cys28. Residues 6 to 9 form a [R/K]XCQ motif region; the sequence is RMCQ. His31 bears the Histidine amide mark.

The protein belongs to the short scorpion toxin superfamily. Potassium channel inhibitor family. Alpha-KTx 05 subfamily. Post-translationally, two disulfide bonds are the minimal requirement needed to produce a nativelike and bio-active conformation in this toxin. The third disulfide provides an additional contribution to structure stabilization and can modulate biological potency depending on its position and the structural regions involved in biological activity. In terms of tissue distribution, expressed by the venom gland.

It is found in the secreted. Blocker for the small conductance calcium-activated potassium channels. Shows the best affinity for KCa2.2/KCNN2 (Kd=0.2 nM), followed by KCa2.3/KCNN3 (Kd=1.1 nM) and KCa2.1/KCNN1 (Kd=325 nM). The chain is Potassium channel toxin alpha-KTx 5.1 from Leiurus hebraeus (Hebrew deathstalker scorpion).